A 281-amino-acid chain; its full sequence is Pantothenate synthetase (281 aa).

An ATP-binding site is contributed by 30–37; sequence MGYLHEGH. The Proton donor role is filled by histidine 37. Glutamine 61 serves as a coordination point for (R)-pantoate. Residue glutamine 61 coordinates beta-alanine. 147–150 contacts ATP; it reads GEKD. A (R)-pantoate-binding site is contributed by glutamine 153. Residues isoleucine 176 and 184-187 each bind ATP; that span reads KSSR.

It belongs to the pantothenate synthetase family. As to quaternary structure, homodimer.

It is found in the cytoplasm. It carries out the reaction (R)-pantoate + beta-alanine + ATP = (R)-pantothenate + AMP + diphosphate + H(+). It participates in cofactor biosynthesis; (R)-pantothenate biosynthesis; (R)-pantothenate from (R)-pantoate and beta-alanine: step 1/1. Functionally, catalyzes the condensation of pantoate with beta-alanine in an ATP-dependent reaction via a pantoyl-adenylate intermediate. This Clostridium botulinum (strain ATCC 19397 / Type A) protein is Pantothenate synthetase.